A 73-amino-acid polypeptide reads, in one-letter code: Large ribosomal subunit protein uL24 (73 aa).

Residues 51–65 (DDNPKGGFIHKEKPM) show a composition bias toward basic and acidic residues. The interval 51–73 (DDNPKGGFIHKEKPMHISNVKKA) is disordered.

It belongs to the universal ribosomal protein uL24 family. In terms of assembly, part of the 50S ribosomal subunit.

In terms of biological role, one of two assembly initiator proteins, it binds directly to the 5'-end of the 23S rRNA, where it nucleates assembly of the 50S subunit. Its function is as follows. One of the proteins that surrounds the polypeptide exit tunnel on the outside of the subunit. In Helicobacter acinonychis (strain Sheeba), this protein is Large ribosomal subunit protein uL24.